Here is a 166-residue protein sequence, read N- to C-terminus: Lipoprotein signal peptidase (166 aa).

4 helical membrane-spanning segments follow: residues 9–29 (ASGA…FDQL), 45–65 (ALTS…FGFL), 71–91 (WQRW…CFLL), and 100–120 (FSVS…DRLV). Catalysis depends on residues aspartate 126 and aspartate 144. A helical transmembrane segment spans residues 135 to 155 (WHFPAFNLADSAITVGAVLLI).

This sequence belongs to the peptidase A8 family.

The protein localises to the cell inner membrane. The enzyme catalyses Release of signal peptides from bacterial membrane prolipoproteins. Hydrolyzes -Xaa-Yaa-Zaa-|-(S,diacylglyceryl)Cys-, in which Xaa is hydrophobic (preferably Leu), and Yaa (Ala or Ser) and Zaa (Gly or Ala) have small, neutral side chains.. It functions in the pathway protein modification; lipoprotein biosynthesis (signal peptide cleavage). Functionally, this protein specifically catalyzes the removal of signal peptides from prolipoproteins. In Burkholderia cenocepacia (strain HI2424), this protein is Lipoprotein signal peptidase.